A 61-amino-acid chain; its full sequence is Small ribosomal subunit protein uS14 (61 aa).

4 residues coordinate Zn(2+): Cys-24, Cys-27, Cys-40, and Cys-43.

It belongs to the universal ribosomal protein uS14 family. Zinc-binding uS14 subfamily. As to quaternary structure, part of the 30S ribosomal subunit. Contacts proteins S3 and S10. The cofactor is Zn(2+).

Its function is as follows. Binds 16S rRNA, required for the assembly of 30S particles and may also be responsible for determining the conformation of the 16S rRNA at the A site. The protein is Small ribosomal subunit protein uS14 of Campylobacter jejuni subsp. jejuni serotype O:6 (strain 81116 / NCTC 11828).